A 1029-amino-acid polypeptide reads, in one-letter code: Ig-like and fibronectin type-III domain-containing protein 1 (1029 aa).

A signal peptide spans 1–22 (MCNVAEDPSSFSTITIATTCRA). Topologically, residues 23–918 (EWPKVSPCIA…RRSASKGSSS (896 aa)) are extracellular. N-linked (GlcNAc...) asparagine glycosylation is found at N36, N93, N120, and N165. A Fibronectin type-III 1 domain is found at 90-181 (APGNVTISEL…TAKLFSTLPT (92 aa)). A WR1 domain is found at 185 to 227 (PLCTIGEPIYMNDGRVMICDAVNPCPNGFRCTGAGSDLSYCCP). N-linked (GlcNAc...) asparagine glycosylation is found at N257, N374, N409, N442, N482, N507, and N552. 2 Fibronectin type-III domains span residues 330 to 417 (AVRN…TKPA) and 427 to 523 (APEK…AQKD). One can recognise an Ig-like C2-type domain in the interval 619–710 (ASVTMKKDKI…SRVEASSEVI (92 aa)). C640 and C693 are disulfide-bonded. N753 carries N-linked (GlcNAc...) asparagine glycosylation. The 93-residue stretch at 817 to 909 (APSEVSNVRI…SAIPKDSEPR (93 aa)) folds into the Fibronectin type-III 4 domain. Residues 919–939 (AFWIVVILVVFGVLIAGLAVL) traverse the membrane as a helical segment. At 940 to 1029 (SKRRELPYPI…NGMRYAKLET (90 aa)) the chain is on the cytoplasmic side. The tract at residues 988–1021 (SATTGTAAATQSEWQSANLEANSTTDNSHEYRNG) is disordered. Residues 998 to 1013 (QSEWQSANLEANSTTD) are compositionally biased toward polar residues.

It localises to the cell membrane. The protein is Ig-like and fibronectin type-III domain-containing protein 1 of Caenorhabditis elegans.